A 235-amino-acid chain; its full sequence is tRNA (guanine-N(1)-)-methyltransferase (235 aa).

Residues glycine 113 and 133–138 (IGDYIL) contribute to the S-adenosyl-L-methionine site.

This sequence belongs to the RNA methyltransferase TrmD family. In terms of assembly, homodimer.

The protein localises to the cytoplasm. It carries out the reaction guanosine(37) in tRNA + S-adenosyl-L-methionine = N(1)-methylguanosine(37) in tRNA + S-adenosyl-L-homocysteine + H(+). Specifically methylates guanosine-37 in various tRNAs. The polypeptide is tRNA (guanine-N(1)-)-methyltransferase (Wolbachia sp. subsp. Brugia malayi (strain TRS)).